The primary structure comprises 670 residues: Probable potassium transport system protein Kup (670 aa).

The tract at residues 1–42 is disordered; that stretch reads MSQIPSPNDPPPAGAVPTSGAPAGPSATPAPSPTAGFSLPEH. Over residues 15 to 35 the composition is skewed to low complexity; the sequence is AVPTSGAPAGPSATPAPSPTA. 12 helical membrane-spanning segments follow: residues 51–71, 91–111, 144–164, 180–200, 208–228, 254–274, 290–310, 322–342, 380–400, 406–426, 440–460, and 464–484; these read LAALAVGALGVVYGDIGTSPL, VLGVLSLVFWAMTFVVTFKYM, VLLMLGLFGAALLYGDGIITP, PAMERVVVPATVVILVFLFLF, VGAVFGPIMLVWFATIAVLGV, GWHGFLVLGGVVLVITGGEAL, WLGLAMPALLLNYLGQGALLL, LLAPEWALYPTIAIATAAAIV, IYLPEVNWMLGTACVALVLGF, LASAYGIAVTGTMIVTTLLFH, AWPLTVLFLTVDASFFLANVV, and DGGWFPIAAAALVFTLMSTWK.

This sequence belongs to the HAK/KUP transporter (TC 2.A.72) family.

It localises to the cell inner membrane. The catalysed reaction is K(+)(in) + H(+)(in) = K(+)(out) + H(+)(out). Transport of potassium into the cell. Likely operates as a K(+):H(+) symporter. The sequence is that of Probable potassium transport system protein Kup from Anaeromyxobacter dehalogenans (strain 2CP-C).